A 260-amino-acid chain; its full sequence is Indole-3-glycerol phosphate synthase (260 aa).

It belongs to the TrpC family.

It catalyses the reaction 1-(2-carboxyphenylamino)-1-deoxy-D-ribulose 5-phosphate + H(+) = (1S,2R)-1-C-(indol-3-yl)glycerol 3-phosphate + CO2 + H2O. The protein operates within amino-acid biosynthesis; L-tryptophan biosynthesis; L-tryptophan from chorismate: step 4/5. The protein is Indole-3-glycerol phosphate synthase of Lacticaseibacillus paracasei (strain ATCC 334 / BCRC 17002 / CCUG 31169 / CIP 107868 / KCTC 3260 / NRRL B-441) (Lactobacillus paracasei).